Here is a 221-residue protein sequence, read N- to C-terminus: Uridylate kinase (221 aa).

7–11 (KISGK) provides a ligand contact to ATP. Position 43 (G43) interacts with UMP. ATP-binding residues include G44 and R48. UMP contacts are provided by residues D62 and 109–115 (LQPGQST). ATP-binding residues include T135 and Y141.

The protein belongs to the UMP kinase family. Homohexamer.

The protein resides in the cytoplasm. The enzyme catalyses UMP + ATP = UDP + ADP. It participates in pyrimidine metabolism; CTP biosynthesis via de novo pathway; UDP from UMP (UMPK route): step 1/1. With respect to regulation, inhibited by UTP. Its function is as follows. Catalyzes the reversible phosphorylation of UMP to UDP. The chain is Uridylate kinase from Ignicoccus hospitalis (strain KIN4/I / DSM 18386 / JCM 14125).